Consider the following 543-residue polypeptide: Splicing factor U2af large subunit B (543 aa).

Over residues 1-10 the composition is skewed to gly residues; the sequence is MADDNGGGGD. The disordered stretch occupies residues 1–171; the sequence is MADDNGGGGD…IPTPSQLPGS (171 aa). 2 stretches are compositionally biased toward basic and acidic residues: residues 17-78 and 88-114; these read VRPE…DRDR and EHRD…ERDG. Residues 115-126 are compositionally biased toward basic residues; the sequence is HRRHRSRSRSRS. 3 RRM domains span residues 207 to 290, 327 to 405, and 446 to 532; these read RRVY…RPTD, DRIF…RANQ, and QVVT…YPEN.

Belongs to the splicing factor SR family.

Its subcellular location is the nucleus. Its function is as follows. Necessary for the splicing of pre-mRNA. This chain is Splicing factor U2af large subunit B (U2AF65B), found in Triticum aestivum (Wheat).